Reading from the N-terminus, the 630-residue chain is 1-deoxy-D-xylulose-5-phosphate synthase (630 aa).

Thiamine diphosphate-binding positions include His-73 and Ser-114–Ala-116. Residue Asp-146 coordinates Mg(2+). Thiamine diphosphate is bound by residues Gly-147 to Ala-148, Asn-176, Phe-287, and Glu-371. Position 176 (Asn-176) interacts with Mg(2+).

This sequence belongs to the transketolase family. DXPS subfamily. Homodimer. Mg(2+) is required as a cofactor. Requires thiamine diphosphate as cofactor.

It carries out the reaction D-glyceraldehyde 3-phosphate + pyruvate + H(+) = 1-deoxy-D-xylulose 5-phosphate + CO2. It functions in the pathway metabolic intermediate biosynthesis; 1-deoxy-D-xylulose 5-phosphate biosynthesis; 1-deoxy-D-xylulose 5-phosphate from D-glyceraldehyde 3-phosphate and pyruvate: step 1/1. Its function is as follows. Catalyzes the acyloin condensation reaction between C atoms 2 and 3 of pyruvate and glyceraldehyde 3-phosphate to yield 1-deoxy-D-xylulose-5-phosphate (DXP). The polypeptide is 1-deoxy-D-xylulose-5-phosphate synthase (Corynebacterium jeikeium (strain K411)).